Here is a 589-residue protein sequence, read N- to C-terminus: Class I diterpene synthase 2, chloroplastic (589 aa).

Mg(2+)-binding residues include Asp-328, Asp-332, Asn-472, Thr-476, and Glu-480. A DDXXD motif motif is present at residues 328-332 (DDFFD).

The protein belongs to the terpene synthase family. Mg(2+) is required as a cofactor. In terms of tissue distribution, mostly expressed in trichomes of leaves and fruits.

It localises to the plastid. It is found in the chloroplast. The catalysed reaction is 9alpha-copalyl diphosphate + H2O = (13S)-vitexifolin A + diphosphate. It carries out the reaction peregrinol diphosphate = (13R)-9,13-epoxylabd-14-ene + diphosphate. The enzyme catalyses peregrinol diphosphate + H2O = viteagnusin D + diphosphate. Its pathway is secondary metabolite biosynthesis; terpenoid biosynthesis. Functionally, involved in the biosynthesis of labdane-type diterpenoid including cleroda-dienols, and peregrinol lactones and furan derivatives, dopaminergic diterpenoids that can bind to dopamine receptors in the human pituitary gland, have probably ability to lower prolactin levels, and are used to treat menstrual cycle disorders (e.g. premenstrual syndrome and mastodynia). Terpene synthase the catalyzes the conversion of peregrinol diphosphate to viteagnusin D and 9,13(R)-epoxy-labd-14-ene, and of syn-copalyl diphosophate to vitexifolin A. This chain is Class I diterpene synthase 2, chloroplastic, found in Vitex agnus-castus (Chaste tree).